Here is a 99-residue protein sequence, read N- to C-terminus: UPF0729 protein CG18508 (99 aa).

Residues 60–99 (PGGKKTENVSDDDAEESENPPLNATAMAAETEVDESKKEI) form a disordered region. Over residues 68–77 (VSDDDAEESE) the composition is skewed to acidic residues. Phosphoserine is present on S69.

The protein belongs to the UPF0729 family.

In Drosophila melanogaster (Fruit fly), this protein is UPF0729 protein CG18508.